The chain runs to 123 residues: Small ribosomal subunit protein uS12 (123 aa).

D89 carries the post-translational modification 3-methylthioaspartic acid.

The protein belongs to the universal ribosomal protein uS12 family. In terms of assembly, part of the 30S ribosomal subunit. Contacts proteins S8 and S17. May interact with IF1 in the 30S initiation complex.

Its function is as follows. With S4 and S5 plays an important role in translational accuracy. Interacts with and stabilizes bases of the 16S rRNA that are involved in tRNA selection in the A site and with the mRNA backbone. Located at the interface of the 30S and 50S subunits, it traverses the body of the 30S subunit contacting proteins on the other side and probably holding the rRNA structure together. The combined cluster of proteins S8, S12 and S17 appears to hold together the shoulder and platform of the 30S subunit. This chain is Small ribosomal subunit protein uS12, found in Syntrophobacter fumaroxidans (strain DSM 10017 / MPOB).